We begin with the raw amino-acid sequence, 450 residues long: NADP-specific glutamate dehydrogenase (450 aa).

The active site involves Lys-111.

The protein belongs to the Glu/Leu/Phe/Val dehydrogenases family. In terms of assembly, homohexamer.

It catalyses the reaction L-glutamate + NADP(+) + H2O = 2-oxoglutarate + NH4(+) + NADPH + H(+). This chain is NADP-specific glutamate dehydrogenase, found in Hebeloma cylindrosporum.